A 263-amino-acid polypeptide reads, in one-letter code: 3-deoxy-manno-octulosonate cytidylyltransferase 2 (263 aa).

This sequence belongs to the KdsB family.

It localises to the cytoplasm. It catalyses the reaction 3-deoxy-alpha-D-manno-oct-2-ulosonate + CTP = CMP-3-deoxy-beta-D-manno-octulosonate + diphosphate. The protein operates within nucleotide-sugar biosynthesis; CMP-3-deoxy-D-manno-octulosonate biosynthesis; CMP-3-deoxy-D-manno-octulosonate from 3-deoxy-D-manno-octulosonate and CTP: step 1/1. It participates in bacterial outer membrane biogenesis; lipopolysaccharide biosynthesis. Functionally, activates KDO (a required 8-carbon sugar) for incorporation into bacterial lipopolysaccharide in Gram-negative bacteria. This is 3-deoxy-manno-octulosonate cytidylyltransferase 2 from Paraburkholderia phytofirmans (strain DSM 17436 / LMG 22146 / PsJN) (Burkholderia phytofirmans).